The following is a 205-amino-acid chain: Dephospho-CoA kinase (205 aa).

In terms of domain architecture, DPCK spans 13–205 (RIGLTGGIAS…KWINTIREIL (193 aa)). An ATP-binding site is contributed by 21 to 26 (ASGKST).

This sequence belongs to the CoaE family.

The protein localises to the cytoplasm. It carries out the reaction 3'-dephospho-CoA + ATP = ADP + CoA + H(+). The protein operates within cofactor biosynthesis; coenzyme A biosynthesis; CoA from (R)-pantothenate: step 5/5. Catalyzes the phosphorylation of the 3'-hydroxyl group of dephosphocoenzyme A to form coenzyme A. The chain is Dephospho-CoA kinase from Prochlorococcus marinus (strain MIT 9312).